Reading from the N-terminus, the 1013-residue chain is Ephrin type-B receptor 6 (1013 aa).

The first 31 residues, 1-31 (MASENTAGSGSRVAGMVYSLWLLVLGPSVLA), serve as a signal peptide directing secretion. Residues 32–590 (LEEVLLDTTG…LPEKLSLVIG (559 aa)) are Extracellular-facing. The 199-residue stretch at 33-231 (EEVLLDTTGE…FSYTCPSVLR (199 aa)) folds into the Eph LBD domain. Fibronectin type-III domains are found at residues 363–478 (PPSA…TSHE) and 479–574 (VPSA…TLPQ). The N-linked (GlcNAc...) asparagine glycan is linked to N472. A helical membrane pass occupies residues 591 to 611 (SILGALAFLLLAAITVLAVIF). Over 612–1013 (QRKRRGTGYT…HLRQPGSVEV (402 aa)) the chain is Cytoplasmic. A Protein kinase domain is found at 662–911 (IKIEEVIGAG…QLVAAFDKMI (250 aa)). Residue 668 to 676 (IGAGSFGEV) participates in ATP binding. The SAM domain occupies 940–1004 (PCLDSPQAWL…LHNIQLLQQH (65 aa)). Positions 1011–1013 (VEV) match the PDZ-binding motif.

It belongs to the protein kinase superfamily. Tyr protein kinase family. Ephrin receptor subfamily. As to quaternary structure, interacts with CBL and EPHB1. Interacts with FYN; this interaction takes place in a ligand-independent manner. Post-translationally, ligand-binding increases phosphorylation on tyrosine residues. Phosphorylation on tyrosine residues is mediated by transphosphorylation by the catalytically active EPHB1 in a ligand-independent manner. Tyrosine phosphorylation of the receptor may act as a switch on the functional transition from cell adhesion/attraction to de-adhesion/repulsion.

The protein resides in the membrane. In terms of biological role, kinase-defective receptor for members of the ephrin-B family. Binds to ephrin-B1 and ephrin-B2. Modulates cell adhesion and migration by exerting both positive and negative effects upon stimulation with ephrin-B2. Inhibits JNK activation, T-cell receptor-induced IL-2 secretion and CD25 expression upon stimulation with ephrin-B2. The chain is Ephrin type-B receptor 6 (Ephb6) from Rattus norvegicus (Rat).